Consider the following 256-residue polypeptide: Galactitol 2-dehydrogenase (256 aa).

NAD(+) is bound by residues 15-17 (RGI), Asp36, 59-60 (DV), Asn86, Tyr152, and Lys156. Tyr152 acts as the Proton acceptor in catalysis.

This sequence belongs to the short-chain dehydrogenases/reductases (SDR) family.

The enzyme catalyses galactitol + NAD(+) = keto-D-tagatose + NADH + H(+). It carries out the reaction keto-D-fructose + NADH + H(+) = D-sorbitol + NAD(+). It functions in the pathway carbohydrate metabolism. In terms of biological role, involved in galactitol catabolism. Catalyzes the oxidation of galactitol to D-tagatose. Can also catalyze the oxidation of D-sorbitol to D-fructose. The chain is Galactitol 2-dehydrogenase from Agrobacterium fabrum (strain C58 / ATCC 33970) (Agrobacterium tumefaciens (strain C58)).